The sequence spans 220 residues: MGEPTPTPAATYSAADPTSAPKLADLAAIKYSPITSSIATPEEIKAITQLWVNNLGLPADTVGTAAIDLARAYADVGASKSATLLGFCPTKPDVRRAALAAQIFVANVTPRQFCAYYAKVVWNLMLATNDPPANWAKAGFQEDTRFAAFDFFDAVDSTGALEPAECSAAPLTATCALDREVRRPCPSAYPERQPHHQHCRGHQGPSWLHQHSLRSACTPY.

This sequence belongs to the potexvirus capsid protein family.

It localises to the virion. Required for genome encapsidation. Forms ribonucleoprotein complexes along with TGB1 helicase and viral RNA. In Cattleya (Nun's hood orchid), this protein is Coat protein.